The following is a 320-amino-acid chain: Ferrochelatase (320 aa).

Fe cation is bound by residues His-194 and Glu-275.

Belongs to the ferrochelatase family. In terms of assembly, monomer.

It localises to the cytoplasm. The enzyme catalyses heme b + 2 H(+) = protoporphyrin IX + Fe(2+). Its pathway is porphyrin-containing compound metabolism; protoheme biosynthesis; protoheme from protoporphyrin-IX: step 1/1. Its function is as follows. Catalyzes the ferrous insertion into protoporphyrin IX. This is Ferrochelatase from Salmonella agona (strain SL483).